Reading from the N-terminus, the 185-residue chain is ATP synthase subunit b, chloroplastic (185 aa).

A helical transmembrane segment spans residues 27 to 49; the sequence is LATNPINLSVVLGVLVFFGKGVL.

The protein belongs to the ATPase B chain family. In terms of assembly, F-type ATPases have 2 components, F(1) - the catalytic core - and F(0) - the membrane proton channel. F(1) has five subunits: alpha(3), beta(3), gamma(1), delta(1), epsilon(1). F(0) has four main subunits: a(1), b(1), b'(1) and c(10-14). The alpha and beta chains form an alternating ring which encloses part of the gamma chain. F(1) is attached to F(0) by a central stalk formed by the gamma and epsilon chains, while a peripheral stalk is formed by the delta, b and b' chains.

The protein localises to the plastid. The protein resides in the chloroplast thylakoid membrane. Functionally, f(1)F(0) ATP synthase produces ATP from ADP in the presence of a proton or sodium gradient. F-type ATPases consist of two structural domains, F(1) containing the extramembraneous catalytic core and F(0) containing the membrane proton channel, linked together by a central stalk and a peripheral stalk. During catalysis, ATP synthesis in the catalytic domain of F(1) is coupled via a rotary mechanism of the central stalk subunits to proton translocation. Its function is as follows. Component of the F(0) channel, it forms part of the peripheral stalk, linking F(1) to F(0). In Glycine max (Soybean), this protein is ATP synthase subunit b, chloroplastic.